A 201-amino-acid chain; its full sequence is dTTP/UTP pyrophosphatase (201 aa).

The active-site Proton acceptor is aspartate 76.

It belongs to the Maf family. YhdE subfamily. A divalent metal cation is required as a cofactor.

Its subcellular location is the cytoplasm. It catalyses the reaction dTTP + H2O = dTMP + diphosphate + H(+). It carries out the reaction UTP + H2O = UMP + diphosphate + H(+). Its function is as follows. Nucleoside triphosphate pyrophosphatase that hydrolyzes dTTP and UTP. May have a dual role in cell division arrest and in preventing the incorporation of modified nucleotides into cellular nucleic acids. The sequence is that of dTTP/UTP pyrophosphatase from Neisseria meningitidis serogroup A / serotype 4A (strain DSM 15465 / Z2491).